Reading from the N-terminus, the 273-residue chain is DnaJ homolog subfamily C member 27 (273 aa).

Residues 1-18 form a required for interaction with MAPK1 region; that stretch reads MEANMPKRKEPGRSLRIK. Residues 23–30, 71–75, and 134–137 contribute to the GTP site; these read GNAEVGKS, DMAGH, and NKID. Residues 217–273 form the J domain; it reads GSWDMLGVKPGASRDEVNKACRKLAVLLHPDKCVAPGSEDAFKAVVNARTALLKNIK.

It belongs to the small GTPase superfamily. Rab family. As to quaternary structure, interacts directly with MAPK1 (wild-type and kinase-deficient forms). Interacts directly (in GTP-bound form) with MAP2K1 (wild-type and kinase-deficient forms).

Its subcellular location is the nucleus. GTPase which can activate the MEK/ERK pathway and induce cell transformation when overexpressed. May act as a nuclear scaffold for MAPK1, probably by association with MAPK1 nuclear export signal leading to enhanced ERK1/ERK2 signaling. This is DnaJ homolog subfamily C member 27 (DNAJC27) from Pongo abelii (Sumatran orangutan).